The following is a 453-amino-acid chain: Sensor histidine kinase CpxA (453 aa).

Over 1 to 4 (MTAR) the chain is Cytoplasmic. Residues 5–25 (IFAIFWLTLALVLMLVLMLPK) form a helical membrane-spanning segment. The Periplasmic portion of the chain corresponds to 26–159 (LDSRQMTELL…SDFINLLFDR (134 aa)). The helical transmembrane segment at 160 to 180 (PLLLLIVTMLVSAPLLLWLAW) threads the bilayer. The HAMP domain occupies 180–233 (WSLAKPARKLKNAADEVAQGNLRQHPELEAGPQEFLAAGASFNQMVTALERMMT). Topologically, residues 181-453 (SLAKPARKLK…TIWLPLYKRT (273 aa)) are cytoplasmic. The 211-residue stretch at 241-451 (DISHELRTPL…RLTIWLPLYK (211 aa)) folds into the Histidine kinase domain. His-244 serves as the catalytic Nucleophile. Position 244 is a phosphohistidine; by autocatalysis (His-244). Residues 244–247 (HELR), 355–360 (RNALRY), Asp-382, 401–402 (RT), and 412–417 (GTGLGL) each bind ATP.

In terms of assembly, interacts with cognate response regulator CpxR.

Its subcellular location is the cell inner membrane. The enzyme catalyses ATP + protein L-histidine = ADP + protein N-phospho-L-histidine.. With respect to regulation, the two-component system is activated by envelope stress such as overexpression of some (misfolded) periplasmic proteins. Its function is as follows. Histidine kinase member of the two-component regulatory system CpxA/CpxR which responds to envelope stress response by activating or, in some cases, repressing expression of downstream genes. Activates CpxR by phosphorylation. This Klebsiella pneumoniae subsp. pneumoniae (strain HS11286) protein is Sensor histidine kinase CpxA.